The sequence spans 569 residues: Arginine--tRNA ligase (569 aa).

A 'HIGH' region motif is present at residues 128 to 138 (ANPTGPLHVGH).

The protein belongs to the class-I aminoacyl-tRNA synthetase family. As to quaternary structure, monomer.

The protein resides in the cytoplasm. The catalysed reaction is tRNA(Arg) + L-arginine + ATP = L-arginyl-tRNA(Arg) + AMP + diphosphate. The sequence is that of Arginine--tRNA ligase from Paracidovorax citrulli (strain AAC00-1) (Acidovorax citrulli).